The primary structure comprises 198 residues: Recombination protein RecR (198 aa).

The segment at 57–72 adopts a C4-type zinc-finger fold; sequence CSVCGNLTDEDPCSIC. The Toprim domain maps to 80–175; that stretch reads SMILVVEDSK…KVTRLARGLA (96 aa).

The protein belongs to the RecR family.

Functionally, may play a role in DNA repair. It seems to be involved in an RecBC-independent recombinational process of DNA repair. It may act with RecF and RecO. The polypeptide is Recombination protein RecR (Streptococcus uberis (strain ATCC BAA-854 / 0140J)).